The sequence spans 544 residues: D-2-hydroxyglutarate dehydrogenase, mitochondrial (544 aa).

Residues 1-10 constitute a mitochondrion transit peptide; it reads MMMPRLVPRW. An FAD-binding PCMH-type domain is found at 119–298; it reads VRGSSKVLLR…TAVSILCPPK (180 aa). Lys124 carries the N6-succinyllysine modification. (R)-2-hydroxyglutarate is bound by residues Arg409, Thr413, and Lys424. Arg409 provides a ligand contact to (R)-lactate. The (R)-malate site is built by Arg409, Thr413, and Lys424. Zn(2+)-binding residues include His457 and His464. Asn466 contributes to the (R)-2-hydroxyglutarate binding site. Glu498 lines the Zn(2+) pocket. (R)-2-hydroxyglutarate is bound at residue His499. His499 provides a ligand contact to (R)-lactate. (R)-malate is bound at residue His499.

Belongs to the FAD-binding oxidoreductase/transferase type 4 family. Requires FAD as cofactor.

The protein localises to the mitochondrion. The enzyme catalyses (R)-2-hydroxyglutarate + A = 2-oxoglutarate + AH2. It catalyses the reaction (R)-malate + A = oxaloacetate + AH2. With respect to regulation, activated by zinc and cobalt ions. In terms of biological role, catalyzes the oxidation of D-2-hydroxyglutarate (D-2-HG) to alpha-ketoglutarate. Also catalyzes the oxidation of other D-2-hydroxyacids, such as D-malate (D-MAL) and D-lactate (D-LAC). Exhibits high activities towards D-2-HG and D-MAL but a very weak activity towards D-LAC. The chain is D-2-hydroxyglutarate dehydrogenase, mitochondrial (D2HGDH) from Bos taurus (Bovine).